Reading from the N-terminus, the 232-residue chain is Large ribosomal subunit protein uL1 (232 aa).

Belongs to the universal ribosomal protein uL1 family. Part of the 50S ribosomal subunit.

Functionally, binds directly to 23S rRNA. The L1 stalk is quite mobile in the ribosome, and is involved in E site tRNA release. Its function is as follows. Protein L1 is also a translational repressor protein, it controls the translation of the L11 operon by binding to its mRNA. The sequence is that of Large ribosomal subunit protein uL1 from Alkaliphilus metalliredigens (strain QYMF).